A 646-amino-acid chain; its full sequence is Leukotriene A-4 hydrolase homolog (646 aa).

A peptide is bound by residues 172-174 (QCQ) and 307-312 (PYGGME). His-336 is a Zn(2+) binding site. Glu-337 acts as the Proton acceptor in catalysis. Positions 340 and 359 each coordinate Zn(2+). Tyr-424 acts as the Proton donor in catalysis.

It belongs to the peptidase M1 family. Zn(2+) is required as a cofactor.

It is found in the cytoplasm. Its subcellular location is the nucleus. It carries out the reaction leukotriene A4 + H2O = leukotriene B4. It participates in lipid metabolism; leukotriene B4 biosynthesis. Aminopeptidase that preferentially cleaves tripeptides. Also has low epoxide hydrolase activity (in vitro). Can hydrolyze an epoxide moiety of LTA(4) to form LTB(4) (in vitro). This chain is Leukotriene A-4 hydrolase homolog, found in Botryotinia fuckeliana (strain B05.10) (Noble rot fungus).